The following is a 510-amino-acid chain: MATPYISMAGIGKSFGPVHALKSVNLTVYPGEIHALLGENGAGKSTLMKVLSGIHEPTKGTITINNISYNKLDHKLAAQLGIGIIYQELSVIDELTVLENLYIGRHLTKKICGVNIIDWREMRVRAAMMLLRVGLKVDLDEKVANLSISHKQMLEIAKTLMLDAKVIIMDEPTSSLTNKEVDYLFLIMNQLRKEGTAIVYISHKLAEIRRICDRYTVMKDGSSVCSGIVSDVSNDDIVRLMVGRELQNRFNAMKENVSNLAHETVFEVRNVTSRDRKKVRDISFSVCRGEILGFAGLVGSGRTELMNCLFGVDKRAGGEIRLNGKDISPRSPLDAVKKGMAYITESRRDNGFFPNFSIAQNMAISRSLKDGGYKGAMGLFHEVDEQRTAENQRELLALKCHSVNQNITELSGGNQQKVLISKWLCCCPEVIIFDEPTRGIDVGAKAEIYKVMRQLADDGKVILMVSSELPEIITVCDRIAVFCEGRLTQILTNRDDMSEEEIMAWALPQE.

ABC transporter domains follow at residues 6 to 245 (ISMA…VGRE) and 260 to 509 (LAHE…ALPQ). Residue 38–45 (GENGAGKS) participates in ATP binding.

The protein belongs to the ABC transporter superfamily. D-allose importer (TC 3.A.1.2.6) family. As to quaternary structure, the complex is composed of two ATP-binding proteins (AlsA), two transmembrane proteins (AlsC) and a solute-binding protein (AlsB).

It localises to the cell inner membrane. It catalyses the reaction D-allose(out) + ATP + H2O = D-allose(in) + ADP + phosphate + H(+). Functionally, part of the ABC transporter complex AlsBAC involved in D-allose import. Probably responsible for energy coupling to the transport system. This chain is D-allose import ATP-binding protein AlsA (alsA), found in Escherichia coli (strain K12).